A 177-amino-acid polypeptide reads, in one-letter code: B-phycoerythrin beta chain (177 aa).

Phycourobilin contacts are provided by Cys-50 and Cys-61. At Asn-72 the chain carries N4-methylasparagine. (2R,3E)-phycoerythrobilin is bound by residues Cys-82 and Cys-158.

It belongs to the phycobiliprotein family. Heteromer of 6 alpha, 6 beta and one gamma chain. In terms of processing, contains two covalently linked phycoerythrobilin chromophores and one covalently linked phycourobilin chromophore.

It is found in the plastid. Its subcellular location is the chloroplast thylakoid membrane. Its function is as follows. Light-harvesting photosynthetic bile pigment-protein from the phycobiliprotein complex. The chain is B-phycoerythrin beta chain (cpeB) from Porphyridium purpureum (Red alga).